A 266-amino-acid chain; its full sequence is Putative carbamate hydrolase RutD (266 aa).

The AB hydrolase-1 domain occupies 15–128 (AVLLSSGLGG…NAHSARCFDA (114 aa)).

It belongs to the AB hydrolase superfamily. Hydrolase RutD family.

The catalysed reaction is carbamate + 2 H(+) = NH4(+) + CO2. Involved in pyrimidine catabolism. May facilitate the hydrolysis of carbamate, a reaction that can also occur spontaneously. The polypeptide is Putative carbamate hydrolase RutD (Variovorax paradoxus (strain S110)).